A 103-amino-acid chain; its full sequence is Putative double-stranded DNA mimic protein APJL_1366 (103 aa).

It belongs to the putative dsDNA mimic protein family.

In terms of biological role, may act as a double-stranded DNA (dsDNA) mimic. Probably regulates the activity of a dsDNA-binding protein. This chain is Putative double-stranded DNA mimic protein APJL_1366, found in Actinobacillus pleuropneumoniae serotype 3 (strain JL03).